Consider the following 200-residue polypeptide: MTSKIFSPKISAVIESLRKLPTIGKKSSQRLALYLLDKSPETAIAIANSLLDATANIKKCVYCQALTEDDVCNICSNTNRDNTKLCIIESMLDMIAIEEAGIYRGKYFVLNGRISPLDGIGPSELKLDILQQIIADRKIDEVILAISPTVEGETTAHFISQMIAKDIKISRIGFGVPFGGELEYLDQQTLLHAFNARTNI.

The C4-type zinc-finger motif lies at 60–75; that stretch reads CVYCQALTEDDVCNIC. A Toprim domain is found at 83–177; sequence TKLCIIESML…KISRIGFGVP (95 aa).

The protein belongs to the RecR family.

In terms of biological role, may play a role in DNA repair. It seems to be involved in an RecBC-independent recombinational process of DNA repair. It may act with RecF and RecO. The protein is Recombination protein RecR of Francisella tularensis subsp. tularensis (strain SCHU S4 / Schu 4).